A 612-amino-acid polypeptide reads, in one-letter code: Indole-3-acetic acid-amido synthetase GH3.5 (612 aa).

This sequence belongs to the IAA-amido conjugating enzyme family.

Its function is as follows. Catalyzes the synthesis of indole-3-acetic acid (IAA)-amino acid conjugates, providing a mechanism for the plant to cope with the presence of excess auxin. Strongly reactive with Glu, Gln, Trp, Asp, Ala, Leu, Phe, Gly, Tyr, Met, Ile and Val. Little or no product formation with His, Ser, Thr, Arg, Lys, or Cys. Also active on pyruvic and butyric acid analogs of IAA, PAA and the synthetic auxin naphthaleneacetic acid (NAA). The two chlorinated synthetic auxin herbicides 2,4-D and 3,6-dichloro-o-anisic acid (dicamba) cannot be used as substrates. This chain is Indole-3-acetic acid-amido synthetase GH3.5 (GH3.5), found in Arabidopsis thaliana (Mouse-ear cress).